Consider the following 67-residue polypeptide: DNA-directed RNA polymerases I, II, and III subunit RPABC5 (67 aa).

Zn(2+) is bound by residues cysteine 7, cysteine 10, cysteine 44, and cysteine 45.

The protein belongs to the archaeal Rpo10/eukaryotic RPB10 RNA polymerase subunit family. As to quaternary structure, component of the RNA polymerase I (Pol I), RNA polymerase II (Pol II) and RNA polymerase III (Pol III) complexes consisting of at least 13, 12 and 17 subunits, respectively.

It is found in the nucleus. Its function is as follows. DNA-dependent RNA polymerase catalyzes the transcription of DNA into RNA using the four ribonucleoside triphosphates as substrates. Common component of RNA polymerases I, II and III which synthesize ribosomal RNA precursors, mRNA precursors and many functional non-coding RNAs, and a small RNAs, such as 5S rRNA and tRNAs, respectively. Pol II is the central component of the basal RNA polymerase II transcription machinery. Pols are composed of mobile elements that move relative to each other. In Pol II, Polr2L is part of the core element with the central large cleft. The sequence is that of DNA-directed RNA polymerases I, II, and III subunit RPABC5 from Drosophila melanogaster (Fruit fly).